Consider the following 1112-residue polypeptide: DNA-directed RNA polymerase subunit beta (1112 aa).

The tract at residues 1087 to 1112 (VGGRRTPNRPTYENIGGPREMEFSED) is disordered.

It belongs to the RNA polymerase beta chain family. In terms of assembly, in cyanobacteria the RNAP catalytic core is composed of 2 alpha, 1 beta, 1 beta', 1 gamma and 1 omega subunit. When a sigma factor is associated with the core the holoenzyme is formed, which can initiate transcription.

The enzyme catalyses RNA(n) + a ribonucleoside 5'-triphosphate = RNA(n+1) + diphosphate. In terms of biological role, DNA-dependent RNA polymerase catalyzes the transcription of DNA into RNA using the four ribonucleoside triphosphates as substrates. The sequence is that of DNA-directed RNA polymerase subunit beta from Gloeobacter violaceus (strain ATCC 29082 / PCC 7421).